The primary structure comprises 241 residues: Uridylate kinase (241 aa).

15–18 (KLSG) lines the ATP pocket. The segment at 23–28 (GSEGFG) is involved in allosteric activation by GTP. Gly-57 is a UMP binding site. ATP contacts are provided by Gly-58 and Arg-62. UMP-binding positions include Asp-77 and 138-145 (TGNPFFTT). The ATP site is built by Thr-165, Phe-171, and Asp-174.

It belongs to the UMP kinase family. As to quaternary structure, homohexamer.

Its subcellular location is the cytoplasm. It catalyses the reaction UMP + ATP = UDP + ADP. It participates in pyrimidine metabolism; CTP biosynthesis via de novo pathway; UDP from UMP (UMPK route): step 1/1. Allosterically activated by GTP. Inhibited by UTP. Functionally, catalyzes the reversible phosphorylation of UMP to UDP. This chain is Uridylate kinase, found in Vibrio vulnificus (strain CMCP6).